The primary structure comprises 159 residues: V-type proton ATPase 16 kDa proteolipid subunit c (159 aa).

Topologically, residues 1–11 are lumenal; sequence MSEEGSPMYSP. The chain crosses the membrane as a helical span at residues 12–32; that stretch reads FFGVMGAASAMVFSALGAAYG. The Cytoplasmic portion of the chain corresponds to 33 to 54; that stretch reads TAKSGVGISAMSVMRPELIMKC. The chain crosses the membrane as a helical span at residues 55–75; that stretch reads IIPVVMAGIIAIYGLVVAVLI. Over 76–93 the chain is Lumenal; sequence AGKLDEAPTYTLYQGFVH. The helical transmembrane segment at 94-114 threads the bilayer; that stretch reads MGAGLSVGLSGLAAGFAIGIV. Residues 115–132 are Cytoplasmic-facing; that stretch reads GDAGVRGTAQQPRLYVGM. A helical membrane pass occupies residues 133–153; that stretch reads ILILIFAEVLGLYGLIVAIFL. Topologically, residues 154–159 are lumenal; it reads YTKTSS.

The protein belongs to the V-ATPase proteolipid subunit family. As to quaternary structure, V-ATPase is a heteromultimeric enzyme made up of two complexes: the ATP-hydrolytic V1 complex and the proton translocation V0 complex. The V1 complex consists of three catalytic AB heterodimers that form a heterohexamer, three peripheral stalks each consisting of EG heterodimers, one central rotor including subunits D and F, and the regulatory subunits C and H. The proton translocation complex V0 consists of the proton transport subunit a, a ring of proteolipid subunits c9c'', rotary subunit d, subunits e and f, and two accessory subunits.

It localises to the vacuole membrane. Functionally, proton-conducting pore forming subunit of the V0 complex of vacuolar(H+)-ATPase (V-ATPase), a multisubunit enzyme composed of a peripheral complex (V1) that hydrolyzes ATP and a membrane integral complex (V0) that translocates protons. V-ATPase is responsible for acidifying and maintaining the pH of intracellular compartments and in some cell types, is targeted to the plasma membrane, where it is responsible for acidifying the extracellular environment. This is V-type proton ATPase 16 kDa proteolipid subunit c from Nephrops norvegicus (Norway lobster).